Here is a 283-residue protein sequence, read N- to C-terminus: NAD kinase (283 aa).

Asp61 functions as the Proton acceptor in the catalytic mechanism. Residues Asp61–Gly62, Asn134–Asp135, Arg145, Asp164, Thr175–Ser180, and Gln234 contribute to the NAD(+) site.

It belongs to the NAD kinase family. Requires a divalent metal cation as cofactor.

It is found in the cytoplasm. It catalyses the reaction NAD(+) + ATP = ADP + NADP(+) + H(+). Involved in the regulation of the intracellular balance of NAD and NADP, and is a key enzyme in the biosynthesis of NADP. Catalyzes specifically the phosphorylation on 2'-hydroxyl of the adenosine moiety of NAD to yield NADP. The chain is NAD kinase from Clostridium kluyveri (strain NBRC 12016).